The chain runs to 372 residues: Chaperone protein DnaJ (372 aa).

A J domain is found at 5-70 (DYYELLEISR…EKKSIYDRYG (66 aa)). The segment at 134–211 (GCNKEINYKY…CKGTGYEEVK (78 aa)) adopts a CR-type zinc-finger fold. Zn(2+) is bound by residues C147, C150, C163, C166, C185, C188, C199, and C202. CXXCXGXG motif repeat units follow at residues 147–154 (CKPCEGTG), 163–170 (CPTCKGQG), 185–192 (CPRCGGTG), and 199–206 (CKSCKGTG).

This sequence belongs to the DnaJ family. As to quaternary structure, homodimer. Zn(2+) is required as a cofactor.

Its subcellular location is the cytoplasm. Its function is as follows. Participates actively in the response to hyperosmotic and heat shock by preventing the aggregation of stress-denatured proteins and by disaggregating proteins, also in an autonomous, DnaK-independent fashion. Unfolded proteins bind initially to DnaJ; upon interaction with the DnaJ-bound protein, DnaK hydrolyzes its bound ATP, resulting in the formation of a stable complex. GrpE releases ADP from DnaK; ATP binding to DnaK triggers the release of the substrate protein, thus completing the reaction cycle. Several rounds of ATP-dependent interactions between DnaJ, DnaK and GrpE are required for fully efficient folding. Also involved, together with DnaK and GrpE, in the DNA replication of plasmids through activation of initiation proteins. The chain is Chaperone protein DnaJ from Aliarcobacter butzleri (strain RM4018) (Arcobacter butzleri).